A 125-amino-acid polypeptide reads, in one-letter code: Large ribosomal subunit protein bL21 (125 aa).

The segment covering Phe-75–His-89 has biased composition (basic residues). Disordered stretches follow at residues Phe-75–Thr-94 and Ala-103–Ala-125. The span at Ala-106–Ala-125 shows a compositional bias: low complexity.

The protein belongs to the bacterial ribosomal protein bL21 family. Part of the 50S ribosomal subunit. Contacts protein L20.

Its function is as follows. This protein binds to 23S rRNA in the presence of protein L20. The chain is Large ribosomal subunit protein bL21 from Methylocella silvestris (strain DSM 15510 / CIP 108128 / LMG 27833 / NCIMB 13906 / BL2).